A 69-amino-acid polypeptide reads, in one-letter code: Small ribosomal subunit protein bS21 (69 aa).

Belongs to the bacterial ribosomal protein bS21 family.

This chain is Small ribosomal subunit protein bS21, found in Hyphomonas neptunium (strain ATCC 15444).